We begin with the raw amino-acid sequence, 159 residues long: Small ribosomal subunit protein bS6 (159 aa).

Residues Sec-46 and Sec-52 are each a non-standard amino acid (selenocysteine).

This sequence belongs to the bacterial ribosomal protein bS6 family.

Its function is as follows. Binds together with bS18 to 16S ribosomal RNA. The polypeptide is Small ribosomal subunit protein bS6 (Desulfotalea psychrophila (strain LSv54 / DSM 12343)).